The sequence spans 79 residues: MILDYINSRIKILWYTDPFLISREGVIVLETEKTFLIKLEEKNKFIRIFKAHGIFEITFKGKSFIIAGYKLVRKPWKRI.

Belongs to the eukaryotic/archaeal RNase P protein component 1 family. Consists of a catalytic RNA component and at least 4-5 protein subunits.

It is found in the cytoplasm. The enzyme catalyses Endonucleolytic cleavage of RNA, removing 5'-extranucleotides from tRNA precursor.. Functionally, part of ribonuclease P, a protein complex that generates mature tRNA molecules by cleaving their 5'-ends. The chain is Ribonuclease P protein component 1 from Saccharolobus solfataricus (strain ATCC 35092 / DSM 1617 / JCM 11322 / P2) (Sulfolobus solfataricus).